A 251-amino-acid chain; its full sequence is MGQKVNPTGFRLGIIKDWTSRWYDDSPVISEKIKQDHVIRNYVLARLKREKAGIARIVIERTTKHVKINIYAARPGAVVGRKGEEINNLSQELTRITGKEVKIDVVEVIKPEIEAQLIGDNIAYQLENRVSFRRAMKQAIQQAMRAGAEGIRIRCAGRLGGAEIARAEQYKEGKIPLHTIRANIDYASVTAHTIAGTIGIKVWVYKGEVLVQRIDAIEEDEMKRMKDRRADSKSRPRDPRSKRRRSRTKRA.

A KH type-2 domain is found at 39–109 (IRNYVLARLK…EVKIDVVEVI (71 aa)). The span at 221 to 239 (EMKRMKDRRADSKSRPRDP) shows a compositional bias: basic and acidic residues. The disordered stretch occupies residues 221 to 251 (EMKRMKDRRADSKSRPRDPRSKRRRSRTKRA). Positions 240 to 251 (RSKRRRSRTKRA) are enriched in basic residues.

The protein belongs to the universal ribosomal protein uS3 family. Part of the 30S ribosomal subunit. Forms a tight complex with proteins S10 and S14.

Functionally, binds the lower part of the 30S subunit head. Binds mRNA in the 70S ribosome, positioning it for translation. In Chlorobium limicola (strain DSM 245 / NBRC 103803 / 6330), this protein is Small ribosomal subunit protein uS3.